A 545-amino-acid polypeptide reads, in one-letter code: CTP synthase (545 aa).

The amidoligase domain stretch occupies residues 1–266 (MTTNYIFVTG…DDYICKRFSL (266 aa)). CTP is bound at residue Ser-14. A UTP-binding site is contributed by Ser-14. Residues 15-20 (SLGKGI) and Asp-72 each bind ATP. Mg(2+) contacts are provided by Asp-72 and Glu-140. Residues 147 to 149 (DIE), 187 to 192 (KTKPTQ), and Lys-223 each bind CTP. UTP is bound by residues 187–192 (KTKPTQ) and Lys-223. 239 to 241 (KDV) lines the ATP pocket. The Glutamine amidotransferase type-1 domain maps to 291-542 (TIGMVGKYIE…VKAASEYQKR (252 aa)). Gly-352 provides a ligand contact to L-glutamine. Cys-379 acts as the Nucleophile; for glutamine hydrolysis in catalysis. L-glutamine-binding positions include 380–383 (LGMQ), Glu-403, and Arg-470. Catalysis depends on residues His-515 and Glu-517.

It belongs to the CTP synthase family. Homotetramer.

It carries out the reaction UTP + L-glutamine + ATP + H2O = CTP + L-glutamate + ADP + phosphate + 2 H(+). The enzyme catalyses L-glutamine + H2O = L-glutamate + NH4(+). The catalysed reaction is UTP + NH4(+) + ATP = CTP + ADP + phosphate + 2 H(+). It functions in the pathway pyrimidine metabolism; CTP biosynthesis via de novo pathway; CTP from UDP: step 2/2. Its activity is regulated as follows. Allosterically activated by GTP, when glutamine is the substrate; GTP has no effect on the reaction when ammonia is the substrate. The allosteric effector GTP functions by stabilizing the protein conformation that binds the tetrahedral intermediate(s) formed during glutamine hydrolysis. Inhibited by the product CTP, via allosteric rather than competitive inhibition. In terms of biological role, catalyzes the ATP-dependent amination of UTP to CTP with either L-glutamine or ammonia as the source of nitrogen. Regulates intracellular CTP levels through interactions with the four ribonucleotide triphosphates. In Citrobacter koseri (strain ATCC BAA-895 / CDC 4225-83 / SGSC4696), this protein is CTP synthase.